An 817-amino-acid chain; its full sequence is Leucine--tRNA ligase (817 aa).

The 'HIGH' region motif lies at 42 to 52 (PYPSGRLHMGH). Positions 576 to 580 (KMSKS) match the 'KMSKS' region motif. ATP is bound at residue Lys579.

This sequence belongs to the class-I aminoacyl-tRNA synthetase family.

It is found in the cytoplasm. It carries out the reaction tRNA(Leu) + L-leucine + ATP = L-leucyl-tRNA(Leu) + AMP + diphosphate. The protein is Leucine--tRNA ligase of Thioalkalivibrio sulfidiphilus (strain HL-EbGR7).